The chain runs to 181 residues: Oligoribonuclease (181 aa).

One can recognise an Exonuclease domain in the interval 8-171 (LIWIDLEMTG…DDIRESIAEL (164 aa)). Residue tyrosine 129 is part of the active site.

This sequence belongs to the oligoribonuclease family.

The protein resides in the cytoplasm. In terms of biological role, 3'-to-5' exoribonuclease specific for small oligoribonucleotides. The sequence is that of Oligoribonuclease from Alcanivorax borkumensis (strain ATCC 700651 / DSM 11573 / NCIMB 13689 / SK2).